The primary structure comprises 294 residues: Protein C3orf33 (294 aa).

A2 carries the post-translational modification N-acetylalanine. The helical transmembrane segment at 40–56 (ISTGMAIAGIMLLLRSI) threads the bilayer.

In terms of tissue distribution, highly expressed in ileocecal tissue and endometrium.

It localises to the membrane. The protein resides in the secreted. Functionally, secreted protein may play a role in transcription regulation via the MAPK3/MAPK1 pathway through an unidentified receptor on the plasma membrane. This chain is Protein C3orf33 (C3orf33), found in Homo sapiens (Human).